The primary structure comprises 285 residues: Undecaprenyl-diphosphatase (285 aa).

The next 7 helical transmembrane spans lie at 12–34 (IVIA…HAVI), 49–69 (IFLP…LVYF), 93–113 (IHIL…GGLL), 120–140 (LFGT…LLLL), 159–179 (LTYA…LPGI), 234–254 (VATI…AFLM), and 263–283 (WALS…FFIL).

This sequence belongs to the UppP family.

The protein resides in the cell inner membrane. It carries out the reaction di-trans,octa-cis-undecaprenyl diphosphate + H2O = di-trans,octa-cis-undecaprenyl phosphate + phosphate + H(+). In terms of biological role, catalyzes the dephosphorylation of undecaprenyl diphosphate (UPP). Confers resistance to bacitracin. This is Undecaprenyl-diphosphatase from Gluconacetobacter diazotrophicus (strain ATCC 49037 / DSM 5601 / CCUG 37298 / CIP 103539 / LMG 7603 / PAl5).